The chain runs to 1442 residues: DNA-binding protein RFX7 (1442 aa).

The tract at residues 1-36 is disordered; the sequence is MEEEQQQQQQQQQAQKMQGTEQSAQLPPSAPGALPA. The RFX-type winged-helix DNA-binding region spans 112 to 187; the sequence is AFSWIRNTLE…YCYSGLRKKA (76 aa). Residues 192 to 197 carry the PxLPxI/L motif motif; it reads PSLPNL. Disordered stretches follow at residues 406–426, 485–514, and 929–1001; these read MQSV…GDRS, SAGT…KNGS, and SVTP…SVPP. Positions 935 to 947 are enriched in pro residues; the sequence is TPTPTPTPTPTLT. Residues 957-995 show a composition bias toward polar residues; it reads GTQSLSRESPCSRLAQTTPVDSALGSSRHTPVGTPHSNC.

It belongs to the RFX family.

Its subcellular location is the nucleus. Its function is as follows. Transcription factor. Acts as a transcriptional activator by binding to promoter regions of target genes. Plays a role in natural killer (NK) cell maintenance and immunity. Plays a role in the process of ciliogenesis in the neural tube and neural tube closure by regulating the expression of RFX4. This Xenopus laevis (African clawed frog) protein is DNA-binding protein RFX7.